Consider the following 178-residue polypeptide: Mediator of RNA polymerase II transcription subunit 21 (178 aa).

Positions Asp-36–Glu-91 are disordered. Residues Glu-67–Ser-85 show a composition bias toward low complexity. Residues Asn-128–Val-169 adopt a coiled-coil conformation.

It belongs to the Mediator complex subunit 21 family. Component of the Mediator complex.

It localises to the nucleus. Component of the Mediator complex, a coactivator involved in the regulated transcription of nearly all RNA polymerase II-dependent genes. Mediator functions as a bridge to convey information from gene-specific regulatory proteins to the basal RNA polymerase II transcription machinery. Mediator is recruited to promoters by direct interactions with regulatory proteins and serves as a scaffold for the assembly of a functional preinitiation complex with RNA polymerase II and the general transcription factors. The sequence is that of Mediator of RNA polymerase II transcription subunit 21 (SRB7) from Candida albicans (strain SC5314 / ATCC MYA-2876) (Yeast).